Reading from the N-terminus, the 504-residue chain is 2-isopropylmalate synthase (504 aa).

A Pyruvate carboxyltransferase domain is found at 6-267 (IIIFDTTLRD…YTGIISKEIY (262 aa)). Residues D15, H201, H203, and N237 each coordinate Mn(2+). Residues 391-504 (EITDLLQSSG…LNSYLRIHKN (114 aa)) form a regulatory domain region.

Belongs to the alpha-IPM synthase/homocitrate synthase family. LeuA type 1 subfamily. As to quaternary structure, homodimer. The cofactor is Mn(2+).

Its subcellular location is the cytoplasm. The catalysed reaction is 3-methyl-2-oxobutanoate + acetyl-CoA + H2O = (2S)-2-isopropylmalate + CoA + H(+). The protein operates within amino-acid biosynthesis; L-leucine biosynthesis; L-leucine from 3-methyl-2-oxobutanoate: step 1/4. Functionally, catalyzes the condensation of the acetyl group of acetyl-CoA with 3-methyl-2-oxobutanoate (2-ketoisovalerate) to form 3-carboxy-3-hydroxy-4-methylpentanoate (2-isopropylmalate). The polypeptide is 2-isopropylmalate synthase (Campylobacter concisus (strain 13826)).